We begin with the raw amino-acid sequence, 474 residues long: tRNA-2-methylthio-N(6)-dimethylallyladenosine synthase (474 aa).

The region spanning 3–120 (QKLHIKTWGC…LPEMINQIRG (118 aa)) is the MTTase N-terminal domain. [4Fe-4S] cluster is bound by residues Cys12, Cys49, Cys83, Cys157, Cys161, and Cys164. The 233-residue stretch at 143-375 (KAEGPTAFVS…QQRINNQAAK (233 aa)) folds into the Radical SAM core domain. Residues 378 to 441 (RAMLGTEQRV…TNSLRGDVIR (64 aa)) form the TRAM domain.

The protein belongs to the methylthiotransferase family. MiaB subfamily. In terms of assembly, monomer. The cofactor is [4Fe-4S] cluster.

It is found in the cytoplasm. The catalysed reaction is N(6)-dimethylallyladenosine(37) in tRNA + (sulfur carrier)-SH + AH2 + 2 S-adenosyl-L-methionine = 2-methylsulfanyl-N(6)-dimethylallyladenosine(37) in tRNA + (sulfur carrier)-H + 5'-deoxyadenosine + L-methionine + A + S-adenosyl-L-homocysteine + 2 H(+). Its function is as follows. Catalyzes the methylthiolation of N6-(dimethylallyl)adenosine (i(6)A), leading to the formation of 2-methylthio-N6-(dimethylallyl)adenosine (ms(2)i(6)A) at position 37 in tRNAs that read codons beginning with uridine. The protein is tRNA-2-methylthio-N(6)-dimethylallyladenosine synthase of Actinobacillus succinogenes (strain ATCC 55618 / DSM 22257 / CCUG 43843 / 130Z).